A 224-amino-acid polypeptide reads, in one-letter code: Mammalian ependymin-related protein 1 (224 aa).

A signal peptide spans 1–37; it reads MPGRAPLRTVPGALGAWLLGGLWAWTLCGLCSLGAVG. Intrachain disulfides connect Cys42-Cys172, Cys88-Cys222, and Cys113-Cys210. Residues Asn130 and Asn182 are each glycosylated (N-linked (GlcNAc...) asparagine).

The protein belongs to the ependymin family. As to quaternary structure, homodimer. N-glycosylated; the glycan contains mannose-6-phosphate moieties. In terms of tissue distribution, ubiquitous. Detected in brain, heart, skeletal muscle, kidney, testis, ovary and prostate.

Its subcellular location is the lysosome lumen. It localises to the secreted. Functionally, binds anionic lipids and gangliosides at acidic pH. The protein is Mammalian ependymin-related protein 1 (EPDR1) of Homo sapiens (Human).